The primary structure comprises 186 residues: uncharacterized protein (186 aa).

This sequence belongs to the geranylgeranyl reductase family. ChlP subfamily.

This is an uncharacterized protein from Methanosarcina barkeri.